A 452-amino-acid chain; its full sequence is Maltoporin (452 aa).

The first 25 residues, 1–25 (MMITLRKLPLAVAVAAGVMSAQAMA), serve as a signal peptide directing secretion.

Belongs to the porin LamB (TC 1.B.3) family. As to quaternary structure, homotrimer formed of three 18-stranded antiparallel beta-barrels, containing three independent channels.

It localises to the cell outer membrane. The catalysed reaction is beta-maltose(in) = beta-maltose(out). In terms of biological role, involved in the transport of maltose and maltodextrins. The chain is Maltoporin from Salmonella newport (strain SL254).